The primary structure comprises 459 residues: uncharacterized protein (459 aa).

One can recognise a TRAM domain in the interval 7–65 (PVNKNEIYTLTFEDLTHEGNGVAKIEGYPLFVPEVLPDEQAKVKVVKVNKNFGFGKLLE). Residues Cys-78, Cys-82, Cys-85, and Cys-164 each coordinate [4Fe-4S] cluster. The S-adenosyl-L-methionine site is built by Gln-288, Tyr-317, Glu-338, and Asp-386. Cys-413 serves as the catalytic Nucleophile.

The protein belongs to the class I-like SAM-binding methyltransferase superfamily. RNA M5U methyltransferase family.

This is an uncharacterized protein from Oceanobacillus iheyensis (strain DSM 14371 / CIP 107618 / JCM 11309 / KCTC 3954 / HTE831).